We begin with the raw amino-acid sequence, 334 residues long: Mevalonate kinase (334 aa).

ATP is bound at residue 110–120; it reads PVGAGLGSSAA. The Proton acceptor role is filled by Asp161.

Belongs to the GHMP kinase family. Mevalonate kinase subfamily. As to quaternary structure, homodimer. Mg(2+) is required as a cofactor.

It is found in the cytoplasm. It carries out the reaction (R)-mevalonate + ATP = (R)-5-phosphomevalonate + ADP + H(+). Its pathway is isoprenoid biosynthesis; isopentenyl diphosphate biosynthesis via mevalonate pathway; isopentenyl diphosphate from (R)-mevalonate: step 1/3. Catalyzes the phosphorylation of (R)-mevalonate (MVA) to (R)-mevalonate 5-phosphate (MVAP). Functions in the mevalonate (MVA) pathway leading to isopentenyl diphosphate (IPP), a key precursor for the biosynthesis of isoprenoid compounds such as archaeal membrane lipids. The polypeptide is Mevalonate kinase (Thermococcus gammatolerans (strain DSM 15229 / JCM 11827 / EJ3)).